The following is a 55-amino-acid chain: ATP synthase F(0) complex subunit 8 (55 aa).

The chain crosses the membrane as a helical span at residues 7–29; sequence NPWFYIMLMSWLTFSLIIQPELL.

This sequence belongs to the ATPase protein 8 family. Component of the ATP synthase complex composed at least of ATP5F1A/subunit alpha, ATP5F1B/subunit beta, ATP5MC1/subunit c (homooctomer), MT-ATP6/subunit a, MT-ATP8/subunit 8, ATP5ME/subunit e, ATP5MF/subunit f, ATP5MG/subunit g, ATP5MK/subunit k, ATP5MJ/subunit j, ATP5F1C/subunit gamma, ATP5F1D/subunit delta, ATP5F1E/subunit epsilon, ATP5PF/subunit F6, ATP5PB/subunit b, ATP5PD/subunit d, ATP5PO/subunit OSCP. ATP synthase complex consists of a soluble F(1) head domain (subunits alpha(3) and beta(3)) - the catalytic core - and a membrane F(0) domain - the membrane proton channel (subunits c, a, 8, e, f, g, k and j). These two domains are linked by a central stalk (subunits gamma, delta, and epsilon) rotating inside the F1 region and a stationary peripheral stalk (subunits F6, b, d, and OSCP).

The protein resides in the mitochondrion membrane. Its function is as follows. Subunit 8, of the mitochondrial membrane ATP synthase complex (F(1)F(0) ATP synthase or Complex V) that produces ATP from ADP in the presence of a proton gradient across the membrane which is generated by electron transport complexes of the respiratory chain. ATP synthase complex consist of a soluble F(1) head domain - the catalytic core - and a membrane F(1) domain - the membrane proton channel. These two domains are linked by a central stalk rotating inside the F(1) region and a stationary peripheral stalk. During catalysis, ATP synthesis in the catalytic domain of F(1) is coupled via a rotary mechanism of the central stalk subunits to proton translocation. In vivo, can only synthesize ATP although its ATP hydrolase activity can be activated artificially in vitro. Part of the complex F(0) domain. The polypeptide is ATP synthase F(0) complex subunit 8 (Musophaga violacea (Violet turaco)).